Consider the following 163-residue polypeptide: Putative C-type lectin protein FPV239 (163 aa).

The 112-residue stretch at Cys-48–Arg-159 folds into the C-type lectin domain. Cystine bridges form between Cys-76–Cys-158 and Cys-137–Cys-150.

This Fowlpox virus (strain NVSL) (FPV) protein is Putative C-type lectin protein FPV239.